The sequence spans 384 residues: Glucose-fructose oxidoreductase domain-containing protein 2 (384 aa).

Positions 1–25 are cleaved as a signal peptide; it reads MMTLPGIGVFGTGNTARVLIQLLRA. A disordered region spans residues 358–384; sequence GEWESVELTNEETDSNQNLSEVIQHNL. Residues 372–384 show a composition bias toward polar residues; sequence SNQNLSEVIQHNL.

This sequence belongs to the Gfo/Idh/MocA family.

The protein localises to the secreted. Its subcellular location is the extracellular space. The protein resides in the extracellular matrix. Functionally, promotes matrix assembly. The protein is Glucose-fructose oxidoreductase domain-containing protein 2 (gfod2) of Xenopus laevis (African clawed frog).